A 102-amino-acid chain; its full sequence is MIKSELVQIVAARNPHLYHRDVENIVNAVLDEITDALAAGNRVELRGFGAFSVKNRPSRSGRNPRTGDTVFVEEKWVPFFKTGKELRERLNPGAGDEDDDDN.

This sequence belongs to the bacterial histone-like protein family. In terms of assembly, heterodimer of an alpha and a beta chain.

Functionally, this protein is one of the two subunits of integration host factor, a specific DNA-binding protein that functions in genetic recombination as well as in transcriptional and translational control. In Rhizobium rhizogenes (strain K84 / ATCC BAA-868) (Agrobacterium radiobacter), this protein is Integration host factor subunit beta.